The following is a 33-amino-acid chain: Photosystem II reaction center protein Psb30 (33 aa).

A helical transmembrane segment spans residues Val5–Leu25.

This sequence belongs to the Psb30/Ycf12 family. PSII is composed of 1 copy each of membrane proteins PsbA, PsbB, PsbC, PsbD, PsbE, PsbF, PsbH, PsbI, PsbJ, PsbK, PsbL, PsbM, PsbT, PsbX, PsbY, PsbZ, Psb30/Ycf12, peripheral proteins of the oxygen-evolving complex and a large number of cofactors. It forms dimeric complexes.

Its subcellular location is the plastid. The protein localises to the chloroplast thylakoid membrane. Functionally, a core subunit of photosystem II (PSII), probably helps stabilize the reaction center. This chain is Photosystem II reaction center protein Psb30, found in Marchantia polymorpha (Common liverwort).